Reading from the N-terminus, the 488-residue chain is 3-octaprenyl-4-hydroxybenzoate carboxy-lyase (488 aa).

N172 is a binding site for Mn(2+). Prenylated FMN-binding positions include 175–177 (IYR), 189–191 (RWL), and 194–195 (RG). E238 provides a ligand contact to Mn(2+). The active-site Proton donor is D287.

Belongs to the UbiD family. As to quaternary structure, homohexamer. It depends on prenylated FMN as a cofactor. The cofactor is Mn(2+).

Its subcellular location is the cell membrane. It carries out the reaction a 4-hydroxy-3-(all-trans-polyprenyl)benzoate + H(+) = a 2-(all-trans-polyprenyl)phenol + CO2. The protein operates within cofactor biosynthesis; ubiquinone biosynthesis. In terms of biological role, catalyzes the decarboxylation of 3-octaprenyl-4-hydroxy benzoate to 2-octaprenylphenol, an intermediate step in ubiquinone biosynthesis. In Ectopseudomonas mendocina (strain ymp) (Pseudomonas mendocina), this protein is 3-octaprenyl-4-hydroxybenzoate carboxy-lyase.